Here is a 750-residue protein sequence, read N- to C-terminus: Olfactomedin-like protein 2B (750 aa).

Positions 1–22 are cleaved as a signal peptide; the sequence is MAKPRLLVLYFALIVVPAWVSS. 2 coiled-coil regions span residues 40–68 and 179–213; these read AEDETLQNEADNQENVLSQLLGDYDKVKA and KLEEEVSKNLTKENEQIKEDMEEIRTEMNKRGKEN. 2 N-linked (GlcNAc...) asparagine glycosylation sites follow: Asn187 and Asn213. Disordered stretches follow at residues 346–437 and 452–484; these read TRRP…PPAV and VPPTTVRTDSLGKDAPAGWGTTPASPTLSPEEE. Polar residues-rich tracts occupy residues 354-384 and 393-413; these read QGHSTAVTSDLNARTAPWSSALPQPSTSDPS and PTLQTTSVSPDPTRESVLQPS. Residues 416-430 show a composition bias toward low complexity; the sequence is VPATTVAHTATQQPA. An Olfactomedin-like domain is found at 493–750; that stretch reads RCKDTLSTIT…QVTYHVIFAY (258 aa). A disulfide bond links Cys494 and Cys680. Asn695 is a glycosylation site (N-linked (GlcNAc...) asparagine).

As to quaternary structure, homodimer. Binds to heparin and chondroitin sulfate E. O-glycosylated and N-glycosylated.

It is found in the secreted. This chain is Olfactomedin-like protein 2B (OLFML2B), found in Homo sapiens (Human).